Consider the following 268-residue polypeptide: tRNA (guanine-N(1)-)-methyltransferase (268 aa).

Residues G113 and I133–L138 each bind S-adenosyl-L-methionine. Residues R238 to R268 form a disordered region.

Belongs to the RNA methyltransferase TrmD family. In terms of assembly, homodimer.

It localises to the cytoplasm. It carries out the reaction guanosine(37) in tRNA + S-adenosyl-L-methionine = N(1)-methylguanosine(37) in tRNA + S-adenosyl-L-homocysteine + H(+). Functionally, specifically methylates guanosine-37 in various tRNAs. The protein is tRNA (guanine-N(1)-)-methyltransferase of Thermomicrobium roseum (strain ATCC 27502 / DSM 5159 / P-2).